A 155-amino-acid chain; its full sequence is Endoribonuclease YbeY (155 aa).

Residues H114, H118, and H124 each contribute to the Zn(2+) site.

The protein belongs to the endoribonuclease YbeY family. Requires Zn(2+) as cofactor.

It is found in the cytoplasm. Single strand-specific metallo-endoribonuclease involved in late-stage 70S ribosome quality control and in maturation of the 3' terminus of the 16S rRNA. This is Endoribonuclease YbeY from Proteus mirabilis (strain HI4320).